Here is a 231-residue protein sequence, read N- to C-terminus: Trypsin (231 aa).

Residues 1-8 constitute a propeptide, activation peptide; the sequence is FPTDDDDK. The region spanning 9–229 is the Peptidase S1 domain; that stretch reads IVGGYTCAAN…YVNWIQQTIA (221 aa). 6 cysteine pairs are disulfide-bonded: Cys-15–Cys-145, Cys-33–Cys-49, Cys-117–Cys-218, Cys-124–Cys-191, Cys-156–Cys-170, and Cys-181–Cys-205. The active-site Charge relay system is the His-48. Ca(2+)-binding residues include Glu-60, Asn-62, Val-65, and Glu-70. The active-site Charge relay system is the Asp-92. The active-site Charge relay system is the Ser-185.

It belongs to the peptidase S1 family. It depends on Ca(2+) as a cofactor.

The protein localises to the secreted. The protein resides in the extracellular space. It catalyses the reaction Preferential cleavage: Arg-|-Xaa, Lys-|-Xaa.. This chain is Trypsin, found in Sus scrofa (Pig).